We begin with the raw amino-acid sequence, 383 residues long: Acetylornithine deacetylase (383 aa).

His80 serves as a coordination point for Zn(2+). Asp82 is a catalytic residue. Asp112 provides a ligand contact to Zn(2+). Residue Glu144 is part of the active site. 3 residues coordinate Zn(2+): Glu145, Glu169, and His355.

The protein belongs to the peptidase M20A family. ArgE subfamily. Homodimer. It depends on Zn(2+) as a cofactor. Co(2+) serves as cofactor. Requires glutathione as cofactor.

Its subcellular location is the cytoplasm. The catalysed reaction is N(2)-acetyl-L-ornithine + H2O = L-ornithine + acetate. Its pathway is amino-acid biosynthesis; L-arginine biosynthesis; L-ornithine from N(2)-acetyl-L-ornithine (linear): step 1/1. Catalyzes the hydrolysis of the amide bond of N(2)-acetylated L-amino acids. Cleaves the acetyl group from N-acetyl-L-ornithine to form L-ornithine, an intermediate in L-arginine biosynthesis pathway, and a branchpoint in the synthesis of polyamines. This Escherichia coli O7:K1 (strain IAI39 / ExPEC) protein is Acetylornithine deacetylase.